A 360-amino-acid chain; its full sequence is Ribosomal RNA large subunit methyltransferase M (360 aa).

S-adenosyl-L-methionine-binding positions include serine 192, 225–228 (APGG), aspartate 244, aspartate 264, and aspartate 280. Lysine 309 (proton acceptor) is an active-site residue.

It belongs to the class I-like SAM-binding methyltransferase superfamily. RNA methyltransferase RlmE family. RlmM subfamily. As to quaternary structure, monomer.

The protein localises to the cytoplasm. It catalyses the reaction cytidine(2498) in 23S rRNA + S-adenosyl-L-methionine = 2'-O-methylcytidine(2498) in 23S rRNA + S-adenosyl-L-homocysteine + H(+). Its function is as follows. Catalyzes the 2'-O-methylation at nucleotide C2498 in 23S rRNA. The sequence is that of Ribosomal RNA large subunit methyltransferase M from Alkalilimnicola ehrlichii (strain ATCC BAA-1101 / DSM 17681 / MLHE-1).